Reading from the N-terminus, the 108-residue chain is Succinate dehydrogenase assembly factor 4, mitochondrial (108 aa).

Residues 33 to 46 (NNNNNNNNNNNNNN) show a composition bias toward low complexity. Disordered stretches follow at residues 33 to 59 (NNNNNNNNNNNNNNISNKKAEMSKENQ) and 79 to 108 (NPITKEIGGPKGPEPTRYNDWERNGRVSDF). Basic and acidic residues predominate over residues 95–108 (RYNDWERNGRVSDF).

It belongs to the SDHAF4 family. Interacts with SdhA in its FAD-bound form.

The protein localises to the mitochondrion matrix. Functionally, plays an essential role in the assembly of succinate dehydrogenase (SDH), an enzyme complex (also referred to as respiratory complex II) that is a component of both the tricarboxylic acid (TCA) cycle and the mitochondrial electron transport chain, and which couples the oxidation of succinate to fumarate with the reduction of ubiquinone (coenzyme Q) to ubiquinol. Binds to the flavoprotein subunit SdhA in its FAD-bound form, blocking the generation of excess reactive oxygen species (ROS) and facilitating its assembly with the iron-sulfur protein subunit SdhB into the SDH catalytic dimer. The sequence is that of Succinate dehydrogenase assembly factor 4, mitochondrial from Dictyostelium discoideum (Social amoeba).